The primary structure comprises 433 residues: MATDTERCIFRAFGQDFILNKHFHLTGKIGRGSHSLICSSTYTESNEETHVAIRKIPNAFGNKLSCKRTLRELKLLRHLRGHPNIVWLFDTDIVFYPNGALNGVYLYEELMECDLSQIIRSEQRLEDAHFQSFIYQILCALKYIHSANVLHCDLKPKNLLVNSDCQLKICNFGLSCSYSENHKVNDGFIKGYITSIWYKAPEILLNYQECTKAVDIWSTGCILAELLGRKPMFEGKDYVDHLNHILQILGTPPEETLQEIASQKVYNYIFQFGNIPGRSFESILPGANPEALELLKKMLEFDPKKRITVEDALEHPYLSMWHDIDEEFSCQKTFRFEFEHIESMAELGNEVIKEVFDFRKVVRKHPISGDSPSSSLSLEDAIPQEVVQVHPSRKVLPSYSPEFSYVSQLPSLTTTQPYQNLMGISSNSFQGVN.

A Protein kinase domain is found at 23–318 (FHLTGKIGRG…VEDALEHPYL (296 aa)). ATP-binding positions include 29 to 37 (IGRGSHSLI) and K55. D153 acts as the Proton acceptor in catalysis.

This sequence belongs to the protein kinase superfamily. Ser/Thr protein kinase family. In terms of assembly, interacts with RLM1.

The catalysed reaction is L-seryl-[protein] + ATP = O-phospho-L-seryl-[protein] + ADP + H(+). It carries out the reaction L-threonyl-[protein] + ATP = O-phospho-L-threonyl-[protein] + ADP + H(+). Its function is as follows. Serine/threonine-protein kinase involved in the SLT2 mitogen-activated (MAP) kinase signaling pathway that regulates cell wall integrity. May also be involved in the mating pheromone and the CWI MAPK pathways. This Saccharomyces cerevisiae (strain ATCC 204508 / S288c) (Baker's yeast) protein is Serine/threonine-protein kinase KDX1 (KDX1).